The primary structure comprises 275 residues: Serine/threonine-protein phosphatase PGAM5, mitochondrial (275 aa).

Residues 7 to 24 (LIAGGSAAAAILGVVAAG) traverse the membrane as a helical segment.

Belongs to the phosphoglycerate mutase family. BPG-dependent PGAM subfamily. Post-translationally, phosphorylated by the RIPK1/RIPK3 complex under necrotic conditions. This phosphorylation increases PGAM5 phosphatase activity.

The protein localises to the mitochondrion outer membrane. The enzyme catalyses O-phospho-L-seryl-[protein] + H2O = L-seryl-[protein] + phosphate. It carries out the reaction O-phospho-L-threonyl-[protein] + H2O = L-threonyl-[protein] + phosphate. In terms of biological role, displays phosphatase activity for serine/threonine residues. Has apparently no phosphoglycerate mutase activity. May be regulator of mitochondrial dynamics. May be a central mediator for programmed necrosis. This chain is Serine/threonine-protein phosphatase PGAM5, mitochondrial (pgam5), found in Xenopus laevis (African clawed frog).